A 448-amino-acid chain; its full sequence is Protein chibby homolog 2 (448 aa).

Phosphoserine occurs at positions 41, 86, 89, 97, 124, 144, 148, and 150. Residues 164–198 (KECMLQEENKSLREENKALREENRMLSKENKILQV) adopt a coiled-coil conformation. A phosphoserine mark is found at S212 and S225. A coiled-coil region spans residues 242 to 267 (KEDSTLQLLREENRALQQLLEQKQAY). The interval 270–323 (QAEDTAAPAEESKPAPSPHEEPCSPGLLQDQGSGLSSRFEEPKGPPARQEDSKE) is disordered. Basic and acidic residues-rich tracts occupy residues 279 to 291 (EESKPAPSPHEEP) and 307 to 323 (RFEEPKGPPARQEDSKE). Residues S335 and S338 each carry the phosphoserine modification. Residues 356-414 (LQLLREMRQALQALLKENRLLQEENRTLQVLRAEHRGFQEENKALWENNKLKLQQKLVI) adopt a coiled-coil conformation.

The protein belongs to the chibby family. SPERT subfamily. Homodimer. Binds to NEK1. In terms of tissue distribution, testis-specific.

The chain is Protein chibby homolog 2 from Homo sapiens (Human).